The following is a 211-amino-acid chain: Uracil phosphoribosyltransferase (211 aa).

Residues Arg81, Arg106, and 133–141 (DPMLATGNS) contribute to the 5-phospho-alpha-D-ribose 1-diphosphate site. Uracil contacts are provided by residues Ile196 and 201–203 (GDA). Asp202 serves as a coordination point for 5-phospho-alpha-D-ribose 1-diphosphate.

This sequence belongs to the UPRTase family. Mg(2+) is required as a cofactor.

It carries out the reaction UMP + diphosphate = 5-phospho-alpha-D-ribose 1-diphosphate + uracil. It functions in the pathway pyrimidine metabolism; UMP biosynthesis via salvage pathway; UMP from uracil: step 1/1. Allosterically activated by GTP. Its function is as follows. Catalyzes the conversion of uracil and 5-phospho-alpha-D-ribose 1-diphosphate (PRPP) to UMP and diphosphate. The protein is Uracil phosphoribosyltransferase of Paracoccus denitrificans (strain Pd 1222).